Here is a 485-residue protein sequence, read N- to C-terminus: Glutamyl-tRNA(Gln) amidotransferase subunit A (485 aa).

Active-site charge relay system residues include K79 and S154. S178 (acyl-ester intermediate) is an active-site residue.

The protein belongs to the amidase family. GatA subfamily. In terms of assembly, heterotrimer of A, B and C subunits.

The enzyme catalyses L-glutamyl-tRNA(Gln) + L-glutamine + ATP + H2O = L-glutaminyl-tRNA(Gln) + L-glutamate + ADP + phosphate + H(+). Allows the formation of correctly charged Gln-tRNA(Gln) through the transamidation of misacylated Glu-tRNA(Gln) in organisms which lack glutaminyl-tRNA synthetase. The reaction takes place in the presence of glutamine and ATP through an activated gamma-phospho-Glu-tRNA(Gln). This chain is Glutamyl-tRNA(Gln) amidotransferase subunit A, found in Clostridium botulinum (strain Loch Maree / Type A3).